The following is a 173-amino-acid chain: MSRRCTEVKRKSLPSNKYQSISAATSNQIMLASKLINKLTHHGNKELVEKMLDKIIQHIKHKYKADGFEVLESACNNVKPSLQVESLRIGGATYQVPSPVNELRSYTLAIKWIINSAANRTFEKSMWQKIAEELYEASNGRGGAVKKKDDNHKMAEANQAFSHLITKRRSRGN.

It belongs to the universal ribosomal protein uS7 family. As to quaternary structure, part of the 30S ribosomal subunit. Contacts proteins S9 and S11.

Its function is as follows. One of the primary rRNA binding proteins, it binds directly to 16S rRNA where it nucleates assembly of the head domain of the 30S subunit. Is located at the subunit interface close to the decoding center, probably blocks exit of the E-site tRNA. The chain is Small ribosomal subunit protein uS7 from Orientia tsutsugamushi (strain Ikeda) (Rickettsia tsutsugamushi).